A 182-amino-acid chain; its full sequence is Crossover junction endodeoxyribonuclease RuvC (182 aa).

Active-site residues include Asp7, Glu69, and Asp141. Asp7, Glu69, and Asp141 together coordinate Mg(2+).

This sequence belongs to the RuvC family. Homodimer which binds Holliday junction (HJ) DNA. The HJ becomes 2-fold symmetrical on binding to RuvC with unstacked arms; it has a different conformation from HJ DNA in complex with RuvA. In the full resolvosome a probable DNA-RuvA(4)-RuvB(12)-RuvC(2) complex forms which resolves the HJ. Mg(2+) is required as a cofactor.

The protein resides in the cytoplasm. It catalyses the reaction Endonucleolytic cleavage at a junction such as a reciprocal single-stranded crossover between two homologous DNA duplexes (Holliday junction).. Functionally, the RuvA-RuvB-RuvC complex processes Holliday junction (HJ) DNA during genetic recombination and DNA repair. Endonuclease that resolves HJ intermediates. Cleaves cruciform DNA by making single-stranded nicks across the HJ at symmetrical positions within the homologous arms, yielding a 5'-phosphate and a 3'-hydroxyl group; requires a central core of homology in the junction. The consensus cleavage sequence is 5'-(A/T)TT(C/G)-3'. Cleavage occurs on the 3'-side of the TT dinucleotide at the point of strand exchange. HJ branch migration catalyzed by RuvA-RuvB allows RuvC to scan DNA until it finds its consensus sequence, where it cleaves and resolves the cruciform DNA. The protein is Crossover junction endodeoxyribonuclease RuvC of Polaromonas naphthalenivorans (strain CJ2).